Reading from the N-terminus, the 224-residue chain is 7-cyano-7-deazaguanine synthase (224 aa).

8-18 (LSGGMDSAAVI) lines the ATP pocket. Residues Cys186, Cys196, Cys199, and Cys202 each coordinate Zn(2+).

The protein belongs to the QueC family. Requires Zn(2+) as cofactor.

The catalysed reaction is 7-carboxy-7-deazaguanine + NH4(+) + ATP = 7-cyano-7-deazaguanine + ADP + phosphate + H2O + H(+). It functions in the pathway purine metabolism; 7-cyano-7-deazaguanine biosynthesis. Catalyzes the ATP-dependent conversion of 7-carboxy-7-deazaguanine (CDG) to 7-cyano-7-deazaguanine (preQ(0)). In Xanthomonas axonopodis pv. citri (strain 306), this protein is 7-cyano-7-deazaguanine synthase.